Reading from the N-terminus, the 318-residue chain is NADH-ubiquinone oxidoreductase chain 1 (318 aa).

8 helical membrane-spanning segments follow: residues 3 to 23 (TTNI…LTLV), 69 to 89 (FMFT…WIPL), 100 to 120 (LGIL…LWSG), 135 to 155 (AVAQ…SLVL), 171 to 191 (HMWL…STLA), 213 to 233 (VEYA…NIIL), 253 to 273 (ELHT…FLWI), and 294 to 314 (LPLT…FASI).

The protein belongs to the complex I subunit 1 family.

Its subcellular location is the mitochondrion inner membrane. It catalyses the reaction a ubiquinone + NADH + 5 H(+)(in) = a ubiquinol + NAD(+) + 4 H(+)(out). Core subunit of the mitochondrial membrane respiratory chain NADH dehydrogenase (Complex I) that is believed to belong to the minimal assembly required for catalysis. Complex I functions in the transfer of electrons from NADH to the respiratory chain. The immediate electron acceptor for the enzyme is believed to be ubiquinone. In Choloepus didactylus (Southern two-toed sloth), this protein is NADH-ubiquinone oxidoreductase chain 1 (MT-ND1).